Consider the following 131-residue polypeptide: Glycine cleavage system H protein (131 aa).

Positions 24–106 constitute a Lipoyl-binding domain; that stretch reads RVTVGISDHA…YGDGWMYVVE (83 aa). K65 is subject to N6-lipoyllysine.

Belongs to the GcvH family. As to quaternary structure, the glycine cleavage system is composed of four proteins: P, T, L and H. (R)-lipoate is required as a cofactor.

Its function is as follows. The glycine cleavage system catalyzes the degradation of glycine. The H protein shuttles the methylamine group of glycine from the P protein to the T protein. The polypeptide is Glycine cleavage system H protein (Stenotrophomonas maltophilia (strain R551-3)).